We begin with the raw amino-acid sequence, 588 residues long: Calicin (588 aa).

A BTB domain is found at 28-98; the sequence is WDMALTVDHH…FYSGKVVISE (71 aa). The BACK domain occupies 133-235; sequence CLRYLFLAEL…NAVSNKTLMF (103 aa). Serine 149 is modified (phosphoserine). Kelch repeat units follow at residues 280 to 327, 328 to 375, 377 to 423, 425 to 475, 476 to 525, and 526 to 580; these read SVVI…AAGR, YIYI…TCGG, VYSV…TKGD, NLYI…SFHQ, DNIL…IGDS, and KVFV…LAKL.

As to quaternary structure, interacts with CYLC1; the interaction may be relevant for proper acrosome attachment to the nuclear envelope.

Its subcellular location is the cytoplasm. The protein resides in the cytoskeleton. It localises to the perinuclear theca. It is found in the calyx. Its function is as follows. Required for both nuclear and acrosomal shaping during spermiogenesis. This Rattus norvegicus (Rat) protein is Calicin (Ccin).